A 359-amino-acid chain; its full sequence is E3 ubiquitin-protein ligase RNF146 (359 aa).

Residues 38–76 form an RING-type zinc finger; sequence CAICLQTCVHPVSLPCKHVFCYLCVKGASWLGKRCALCR. Glycyl lysine isopeptide (Lys-Gly) (interchain with G-Cter in ubiquitin) cross-links involve residues Lys86 and Lys96. Residues 93–169 enclose the WWE domain; sequence EELKAASRGN…EHGRRRKIKR (77 aa). Residues Tyr109, Arg112, and Trp116 each contribute to the a glycoprotein site. Lys132 is covalently cross-linked (Glycyl lysine isopeptide (Lys-Gly) (interchain with G-Cter in ubiquitin)). The a glycoprotein site is built by Tyr146, Gln155, Arg165, and Lys177. A Glycyl lysine isopeptide (Lys-Gly) (interchain with G-Cter in ubiquitin) cross-link involves residue Lys177. Disordered stretches follow at residues 197-243 and 261-359; these read SSAD…DAGI and ERSH…VTEV. The segment covering 199–212 has biased composition (low complexity); sequence ADGADSGSAQTGAS. Positions 217-235 are enriched in polar residues; sequence VPSSTRPLTSVDGQLTSPV. Positions 284-298 are enriched in acidic residues; sequence SVEETESDASSDSED. 2 positions are modified to phosphoserine: Ser290 and Ser294. The span at 306–324 shows a compositional bias: polar residues; the sequence is HSLTQQRPLVPNGNQTVAD.

As to quaternary structure, can form homooligomers. Interacts with PARsylated AXIN1, AXIN2, BLZF1, CASC3, H1-2, IPO7, LIG3, NCL, PARP1, XRCC1, XRCC5 and XRCC6. Interacts with DDB1, DHX15, IQGAP1, LRPPRC, PARP2, PRKDC, RUVBL2, TNKS1 and TNKS2. Binding often leads to interactor ubiquitination, in the presence of the appropriate E1 and E2 enzymes, and proteasomal degradation. Ubiquitinated; autoubiquitinated. Autoubiquitination is enhanced upon PAR-binding. Expressed at relatively high levels in the brain. Also present in spleen, heart, kidney, testis and liver. In the brain, expressed in the cerebellum, hippocampus, striatum, cortex, frontal cortex and, at lowest levels, in olfactory bulb (at protein level). Predominantly expressed in neurons.

The protein resides in the cytoplasm. It localises to the cytosol. Its subcellular location is the nucleus. It carries out the reaction S-ubiquitinyl-[E2 ubiquitin-conjugating enzyme]-L-cysteine + [acceptor protein]-L-lysine = [E2 ubiquitin-conjugating enzyme]-L-cysteine + N(6)-ubiquitinyl-[acceptor protein]-L-lysine.. It functions in the pathway protein modification; protein ubiquitination. E3 ubiquitin-protein ligase that specifically binds poly-ADP-ribosylated (PARsylated) proteins and mediates their ubiquitination and subsequent degradation. May regulate many important biological processes, such as cell survival and DNA damage response. Acts as an activator of the Wnt signaling pathway by mediating the ubiquitination of PARsylated AXIN1 and AXIN2, 2 key components of the beta-catenin destruction complex. Acts in cooperation with tankyrase proteins (TNKS and TNKS2), which mediate PARsylation of target proteins AXIN1, AXIN2, BLZF1, CASC3, TNKS and TNKS2. Recognizes and binds tankyrase-dependent PARsylated proteins via its WWE domain and mediates their ubiquitination, leading to their degradation. Different ubiquitin linkage types have been observed: TNKS2 undergoes ubiquitination at 'Lys-48' and 'Lys-63', while AXIN1 is only ubiquitinated at 'Lys-48'. May regulate TNKS and TNKS2 subcellular location, preventing aggregation at a centrosomal location. Neuroprotective protein. Protects the brain against N-methyl-D-aspartate (NMDA) receptor-mediated glutamate excitotoxicity and ischemia, by interfering with PAR-induced cell death, called parthanatos. Prevents nuclear translocation of AIFM1 in a PAR-binding dependent manner. Does not affect PARP1 activation. Protects against cell death induced by DNA damaging agents, such as N-methyl-N-nitro-N-nitrosoguanidine (MNNG) and rescues cells from G1 arrest. Promotes cell survival after gamma-irradiation. Facilitates DNA repair. This Mus musculus (Mouse) protein is E3 ubiquitin-protein ligase RNF146 (Rnf146).